Consider the following 302-residue polypeptide: MSGPVLSHLEQLEAESIQIFREVAAEFDNPVMLYSIGKDSSVLLHLARKAFYPGKIPFPLLHVDTDWKFREMIKFRDEAAVKYGFDLLVHKNPEGLAMGMNPFTFGSSKHTDVMKTEGLKQALNKYGFDAAFGGARRDEEKSRAKERVYSFRDSKHRWDPKNQRPELWHTYNGQVNKGESIRVFPLSNWTELDIWQYIYQENIDIVPLYFADYRPVVERNGTLIMVDDERMPLNEGEVPEQKLVRFRTLGCYPLTGAIESSATTLTGIIEEMLLSRSSERQGRVIDHDSSGSMEKKKREGYF.

The disordered stretch occupies residues 280-302 (RQGRVIDHDSSGSMEKKKREGYF).

Belongs to the PAPS reductase family. CysD subfamily. As to quaternary structure, heterodimer composed of CysD, the smaller subunit, and CysN.

It carries out the reaction sulfate + ATP + H(+) = adenosine 5'-phosphosulfate + diphosphate. The protein operates within sulfur metabolism; hydrogen sulfide biosynthesis; sulfite from sulfate: step 1/3. Its function is as follows. With CysN forms the ATP sulfurylase (ATPS) that catalyzes the adenylation of sulfate producing adenosine 5'-phosphosulfate (APS) and diphosphate, the first enzymatic step in sulfur assimilation pathway. APS synthesis involves the formation of a high-energy phosphoric-sulfuric acid anhydride bond driven by GTP hydrolysis by CysN coupled to ATP hydrolysis by CysD. This Shewanella amazonensis (strain ATCC BAA-1098 / SB2B) protein is Sulfate adenylyltransferase subunit 2.